A 167-amino-acid polypeptide reads, in one-letter code: Small heat shock protein C1 (167 aa).

The region spanning 59–167 (PFYESNSIKS…EQDAKEIPIN (109 aa)) is the sHSP domain.

It belongs to the small heat shock protein (HSP20) family.

The sequence is that of Small heat shock protein C1 (hspC1) from Rickettsia bellii (strain RML369-C).